The following is a 420-amino-acid chain: uncharacterized protein (420 aa).

The VWFA domain occupies 43-215; it reads NLCLVLDHSG…HTFRQLFQRM (173 aa). The disordered stretch occupies residues 389-420; the sequence is LQSGEDLSEGDRKKTRMVSKTTLQPPSAPSEH.

This is an uncharacterized protein from Synechocystis sp. (strain ATCC 27184 / PCC 6803 / Kazusa).